Here is a 108-residue protein sequence, read N- to C-terminus: Small ribosomal subunit protein eS25w (108 aa).

The segment at 1–36 (MAPKKDKVPPPSSKPAKSGGGKQKKKKWSKGKQKEK) is disordered. The span at 22–31 (KQKKKKWSKG) shows a compositional bias: basic residues.

Belongs to the eukaryotic ribosomal protein eS25 family.

This is Small ribosomal subunit protein eS25w (RPS25E) from Arabidopsis thaliana (Mouse-ear cress).